The chain runs to 327 residues: Phenylalanine--tRNA ligase alpha subunit (327 aa).

Residue Glu-252 coordinates Mg(2+).

Belongs to the class-II aminoacyl-tRNA synthetase family. Phe-tRNA synthetase alpha subunit type 1 subfamily. In terms of assembly, tetramer of two alpha and two beta subunits. Mg(2+) serves as cofactor.

The protein resides in the cytoplasm. The catalysed reaction is tRNA(Phe) + L-phenylalanine + ATP = L-phenylalanyl-tRNA(Phe) + AMP + diphosphate + H(+). The polypeptide is Phenylalanine--tRNA ligase alpha subunit (Shewanella oneidensis (strain ATCC 700550 / JCM 31522 / CIP 106686 / LMG 19005 / NCIMB 14063 / MR-1)).